The chain runs to 311 residues: Methionyl-tRNA formyltransferase (311 aa).

112-115 contributes to the (6S)-5,6,7,8-tetrahydrofolate binding site; the sequence is SLLP.

Belongs to the Fmt family.

It catalyses the reaction L-methionyl-tRNA(fMet) + (6R)-10-formyltetrahydrofolate = N-formyl-L-methionyl-tRNA(fMet) + (6S)-5,6,7,8-tetrahydrofolate + H(+). Functionally, attaches a formyl group to the free amino group of methionyl-tRNA(fMet). The formyl group appears to play a dual role in the initiator identity of N-formylmethionyl-tRNA by promoting its recognition by IF2 and preventing the misappropriation of this tRNA by the elongation apparatus. This is Methionyl-tRNA formyltransferase from Chelativorans sp. (strain BNC1).